We begin with the raw amino-acid sequence, 815 residues long: Kinesin heavy chain (815 aa).

Positions 11–329 (GVQVFCRIRP…LLFGARAKTI (319 aa)) constitute a Kinesin motor domain. 88–95 (GQTSSGKT) provides a ligand contact to ATP. Coiled coils occupy residues 335–374 (INEELTAEEWKRRYEKEKEKNTRLAALLQAAALELSRWRA), 422–554 (PITD…LDEC), and 695–785 (PAQK…RMNA). The disordered stretch occupies residues 788-815 (IVKPIRPGQVYTSPSAGMSQGAPNGSNA). Residues 797–815 (VYTSPSAGMSQGAPNGSNA) are compositionally biased toward polar residues.

The protein belongs to the TRAFAC class myosin-kinesin ATPase superfamily. Kinesin family. Kinesin subfamily. As to quaternary structure, oligomer composed of two heavy chains and two light chains.

It is found in the cytoplasm. It localises to the cytoskeleton. Microtubule-dependent motor protein required for organelle transport. Plays a role in endosome transport. Required for the transport of mitochondria along the axon of motor neurons. Involved in the nuclear migration of hyp7 hypodermal precursor cells. Required for the formation of dendritic branches of PVD sensory neurons. In non-ciliated neurons such as the PVD and PHC neurons, required for the organization of minus-end out microtubules in dendrites. Also required for the minus-end out orientation of microtubules in dendrites of AQR gas-sensing neurons. Involved in the localization of unc-33 to neurites. Positively regulates cilium position and dendrite morphogenesis in the postembryonic AQR and PQR gas-sensing neurons. Plays a more prominent role in regulating dendrite morphogenesis in AQR than in PQR neurons. Plays a role in regulating the localization of grdn-1 to the distal dendrites of AQR sensory neurons. This Caenorhabditis elegans protein is Kinesin heavy chain.